A 701-amino-acid polypeptide reads, in one-letter code: Polyphosphate kinase (701 aa).

Position 45 (Asn-45) interacts with ATP. Residues Arg-373 and Arg-403 each contribute to the Mg(2+) site. One can recognise a PLD phosphodiesterase 1 domain in the interval 428-462; that stretch reads PGMKIHAKLLLITRKEGDEFVRYAHIGTGNFHERT. The Phosphohistidine intermediate role is filled by His-433. ATP-binding residues include Tyr-466, Arg-562, and His-590. Positions 585 to 615 constitute a PLD phosphodiesterase 2 domain; the sequence is DRFLEHPRVLVVHNDGNPQVFISSADWMERN.

This sequence belongs to the polyphosphate kinase 1 (PPK1) family. The cofactor is Mg(2+). In terms of processing, an intermediate of this reaction is the autophosphorylated ppk in which a phosphate is covalently linked to a histidine residue through a N-P bond.

It carries out the reaction [phosphate](n) + ATP = [phosphate](n+1) + ADP. In terms of biological role, catalyzes the reversible transfer of the terminal phosphate of ATP to form a long-chain polyphosphate (polyP). This chain is Polyphosphate kinase, found in Vibrio cholerae serotype O1 (strain ATCC 39315 / El Tor Inaba N16961).